We begin with the raw amino-acid sequence, 56 residues long: Large ribosomal subunit protein bL32 (56 aa).

The segment covering 1–20 (MAVPKRRTSRSNTRSRRAQW) has biased composition (basic residues). A disordered region spans residues 1 to 26 (MAVPKRRTSRSNTRSRRAQWKAKAPA).

This sequence belongs to the bacterial ribosomal protein bL32 family.

This chain is Large ribosomal subunit protein bL32, found in Parafrankia sp. (strain EAN1pec).